Here is a 111-residue protein sequence, read N- to C-terminus: MKTLLLAVAVVAFVCLGSADQLGLGRQQIDWGQGQAVGLPHGFCIQCNRKTWSNCSIGHRCLPYHMTCYTLYKPDENGEMKWAVKGCARMCPTAKSGERVKCCTGASCNSD.

The signal sequence occupies residues 1–19 (MKTLLLAVAVVAFVCLGSA). Positions 20 to 34 (DQLGLGRQQIDWGQG) are excised as a propeptide. At glutamine 35 the chain carries Pyrrolidone carboxylic acid. 5 cysteine pairs are disulfide-bonded: cysteine 44–cysteine 68, cysteine 47–cysteine 55, cysteine 61–cysteine 87, cysteine 91–cysteine 102, and cysteine 103–cysteine 108.

As to quaternary structure, monomer. Expressed by the venom gland.

It is found in the secreted. This bird-specific postsynaptic neurotoxin irreversibly binds and inhibits the chick muscle alpha-1-beta-1-gamma-delta (CHRNA1-CHRNB1-CHRNG-CHNRD) nicotinic acetylcholine receptor (nAChR) 100-fold more compared with the mouse receptor. The weak binding to mouse receptor is reversible. The chain is Denmotoxin from Boiga dendrophila (Mangrove snake).